The following is an 89-amino-acid chain: MERVTLALLLLAGLTALEANDPFANKDDPFYYDWKNLQLSGLICGGLLAIAGIAAVLSGKCKCKSSQKQHSPVPEKAIPLITPGSATTC.

An N-terminal signal peptide occupies residues 1-20 (MERVTLALLLLAGLTALEAN). Residues 21 to 38 (DPFANKDDPFYYDWKNLQ) lie on the Extracellular side of the membrane. Residues 39–59 (LSGLICGGLLAIAGIAAVLSG) form a helical membrane-spanning segment. The Cytoplasmic portion of the chain corresponds to 60-89 (KCKCKSSQKQHSPVPEKAIPLITPGSATTC).

The protein belongs to the FXYD family. As to quaternary structure, regulatory subunit of the sodium/potassium-transporting ATPase which is composed of a catalytic alpha subunit, a non-catalytic beta subunit and a regulatory subunit. The regulatory subunit, a member of the FXYD protein family, modulates the enzymatic activity in a tissue- and isoform-specific way by changing affinities of the Na+/K+-ATPase toward Na(+), K(+) or ATP.

It localises to the cell membrane. Its subcellular location is the basolateral cell membrane. Functionally, associates with and regulates the activity of the sodium/potassium-transporting ATPase (NKA) which catalyzes the hydrolysis of ATP coupled with the exchange of Na(+) and K(+) ions across the plasma membrane. Increases the apparent affinity of the transporter for Na(+) and increases NKA activity. In Homo sapiens (Human), this protein is FXYD domain-containing ion transport regulator 4 (FXYD4).